A 313-amino-acid chain; its full sequence is Ras-related GTP-binding protein A (313 aa).

The GTP site is built by Ser16, Gly17, Gly19, Lys20, Thr21, Ser22, Thr36, Thr42, Gly65, and His127. GDP contacts are provided by Gly17, Gly19, Lys20, Thr21, and Ser22. Positions 127 and 130 each coordinate GDP. Lys142 participates in a covalent cross-link: Glycyl lysine isopeptide (Lys-Gly) (interchain with G-Cter in ubiquitin). The GDP site is built by Leu148 and Ile164. Ile164 is a GTP binding site. Glycyl lysine isopeptide (Lys-Gly) (interchain with G-Cter in ubiquitin) cross-links involve residues Lys220, Lys230, and Lys244. Ser309 is modified (phosphoserine).

It belongs to the GTR/RAG GTP-binding protein family. Can occur as a homodimer or as a heterodimer with RRAGC or RRAGD in a sequence-independent manner; heterodimerization stabilizes proteins of the heterodimer. The GTP-bound form of RRAGA (in complex with the GDP-bound form of RRAGC or RRAGD) interacts with RPTOR, thereby promoting recruitment of mTORC1 to the lysosomes. The Rag heterodimer interacts with SLC38A9; the probable amino acid sensor. The Rag heterodimer interacts with the Ragulator complex. The GTP-bound form of RRAGA interacts with NOL8. Component of the lysosomal folliculin complex (LFC), composed of FLCN, FNIP1 (or FNIP2), RagA/RRAGA or RagB/RRAGB GDP-bound, RagC/RRAGC or RagD/RRAGD GTP-bound, and Ragulator. Interacts with SH3BP4; the interaction with this negative regulator is most probably direct, preferentially occurs with the inactive GDP-bound form of RRAGA and is negatively regulated by amino acids. Interacts (polyubiquitinated) with TSC2. Interacts with SESN1, SESN2 and SESN3. Interacts with PIP4P1. Interacts with GPR137B. Interacts with WDR83; this interaction regulates the spatiotemporal localization of mTORC1 to the lysosomal surface. Polybiquitinated via 'Lys-63'-linked polyubiquitination by RNF152 in response to amino acid starvation: polyubiquitination of the GDP-bound inactive form by RNF152 promotes RRAGA inactivation and interaction with the GATOR1 complex. This does not affect RRAGA degradation.

It is found in the cytoplasm. The protein resides in the nucleus. It localises to the lysosome membrane. The catalysed reaction is GTP + H2O = GDP + phosphate + H(+). With respect to regulation, the activation of GTP-binding proteins is generally mediated by a guanine exchange factor (GEF), while inactivation through hydrolysis of bound GTP is catalyzed by a GTPase activating protein (GAP). The Ragulator complex functions as a GEF and promotes the active GTP-bound form. The GATOR1 complex functions as a GAP and stimulates RRAGA GTPase activity to turn it into its inactive GDP-bound form, preventing mTORC1 recruitment and activation. Guanine nucleotide-binding protein that plays a crucial role in the cellular response to amino acid availability through regulation of the mTORC1 signaling cascade. Forms heterodimeric Rag complexes with RagC/RRAGC or RagD/RRAGD and cycles between an inactive GDP-bound and an active GTP-bound form: RagA/RRAGA is in its active form when GTP-bound RagA/RRAGA forms a complex with GDP-bound RagC/RRAGC (or RagD/RRAGD) and in an inactive form when GDP-bound RagA/RRAGA heterodimerizes with GTP-bound RagC/RRAGC (or RagD/RRAGD). In its GTP-bound active form, promotes the recruitment of mTORC1 to the lysosomes and its subsequent activation by the GTPase RHEB. Involved in the RCC1/Ran-GTPase pathway. May play a direct role in a TNF-alpha signaling pathway leading to induction of cell death. The chain is Ras-related GTP-binding protein A from Bos taurus (Bovine).